Consider the following 64-residue polypeptide: Small ribosomal subunit protein bS21 (64 aa).

This sequence belongs to the bacterial ribosomal protein bS21 family.

The chain is Small ribosomal subunit protein bS21 from Amoebophilus asiaticus (strain 5a2).